The primary structure comprises 252 residues: UPF0714 protein YndL (252 aa).

The chain crosses the membrane as a helical span at residues 33–51; sequence IVKLLMIFMVFTPISSIYA.

It belongs to the UPF0714 family.

The protein localises to the cell membrane. The protein is UPF0714 protein YndL (yndL) of Bacillus subtilis (strain 168).